A 398-amino-acid chain; its full sequence is Cation channel sperm-associated protein 3 (398 aa).

Over Met1–Met48 the chain is Cytoplasmic. The chain crosses the membrane as a helical span at residues Ser49–Thr71. The Extracellular portion of the chain corresponds to Ser72–Phe80. A helical membrane pass occupies residues Arg81 to Ile107. A topological domain (cytoplasmic) is located at residue Asn108. The chain crosses the membrane as a helical span at residues Tyr109–Leu131. The Extracellular portion of the chain corresponds to Arg132 to Tyr143. A helical membrane pass occupies residues Ile144–Ser160. Residues Gln161 to Thr168 are Cytoplasmic-facing. Residues Ala169–Gly195 form a helical membrane-spanning segment. Residues Phe196–Ala216 lie on the Extracellular side of the membrane. The helical; Pore-forming intramembrane region spans Phe217–Leu236. Residues Asp237–Ala242 lie on the Extracellular side of the membrane. A helical membrane pass occupies residues Leu243 to Ile268. At Met269–Lys398 the chain is on the cytoplasmic side.

The protein belongs to the cation channel sperm-associated (TC 1.A.1.19) family. Component of the CatSper complex or CatSpermasome composed of the core pore-forming members CATSPER1, CATSPER2, CATSPER3 and CATSPER4 as well as auxiliary members CATSPERB, CATSPERG, CATSPERD, CATSPERE, CATSPERZ, C2CD6/CATSPERT, TMEM249, TMEM262 and EFCAB9. HSPA1 may be an additional auxiliary complex member. The core complex members CATSPER1, CATSPER2, CATSPER3 and CATSPER4 form a heterotetrameric channel. The auxiliary CATSPERB, CATSPERG, CATSPERD and CATSPERE subunits form a pavilion-like structure over the pore which stabilizes the complex through interactions with CATSPER4, CATSPER3, CATSPER1 and CATSPER2 respectively. TMEM262/CATSPERH interacts with CATSPERB, further stabilizing the complex. C2CD6/CATSPERT interacts at least with CATSPERD and is required for targeting the CatSper complex in the flagellar membrane. As to expression, testis-specific.

It localises to the cell projection. Its subcellular location is the cilium. The protein localises to the flagellum membrane. The catalysed reaction is Ca(2+)(in) = Ca(2+)(out). With respect to regulation, the CatSper calcium channel is indirectly activated by extracellular progesterone and prostaglandins following the sequence: progesterone &gt; PGF1-alpha = PGE1 &gt; PGA1 &gt; PGE2 &gt;&gt; PGD2. The CatSper calcium channel is directly inhibited by endocannabinoid 2-arachidonoylglycerol (2AG). Indirect activation by progesterone takes place via the following mechanism: progesterone binds and activates the acylglycerol lipase ABHD2, which in turn mediates hydrolysis of 2AG inhibitor, relieving inhibition of the CatSper channel. The primary effect of progesterone activation is to shift voltage dependence towards more physiological, negative membrane potentials; it is not mediated by metabotropic receptors and second messengers. Sperm capacitation enhances the effect of progesterone by providing additional negative shift. Also activated by the elevation of intracellular pH. Functionally, pore-forming subunit of the CatSper complex, a sperm-specific voltage-gated calcium channel that plays a central role in calcium-dependent physiological responses essential for successful fertilization, such as sperm hyperactivation, acrosome reaction and chemotaxis towards the oocyte. This is Cation channel sperm-associated protein 3 (CATSPER3) from Homo sapiens (Human).